We begin with the raw amino-acid sequence, 860 residues long: Nucleolar MIF4G domain-containing protein 1 (860 aa).

Disordered regions lie at residues 1-172, 191-211, and 226-339; these read MAAS…AARK, RCLG…PLSF, and GKNS…EKYI. A necessary for nucleolar localization and for targeting PPP1CA to the nucleolus region spans residues 1–269; the sequence is MAASRSAGEA…EEEEEGDVEK (269 aa). Basic residues predominate over residues 20-31; it reads VRMKRRGGRGPR. The residue at position 57 (Ser-57) is a Phosphoserine. Residues 77-99 show a composition bias toward basic residues; it reads GGRKSRKELRKEKRHLRKARRLQ. Residues 115–131 show a composition bias toward basic and acidic residues; that stretch reads GAEEASGHRQDTEERAR. Position 139 is a phosphoserine (Ser-139). Over residues 142–151 the composition is skewed to basic residues; that stretch reads RKPRPSRVKA. A compositionally biased stretch (low complexity) spans 152 to 169; sequence KATAATAKTRPSAAATAA. Composition is skewed to acidic residues over residues 249-267 and 278-293; these read SDLE…EGDV and AQSE…EQGE. Positions 307–310 match the Required for efficient binding to PPP1CA and for targeting PPP1CA to the nucleolus motif; that stretch reads RVRF. Residues 312–325 show a composition bias toward acidic residues; that stretch reads EDEEKSENSSEDGD. A phosphoserine mark is found at Ser-317, Ser-320, and Ser-321. In terms of domain architecture, MIF4G spans 362 to 559; sequence KKHVKGLLNR…ETMLALKNND (198 aa). The MI domain maps to 654 to 770; sequence DIRRNIFCTI…SLSILKVVEF (117 aa).

Belongs to the CWC22 family. May interact with EIF4A1, EIF4A2 and EIF4A3. Interacts with PPP1CA and PPP1CC. In terms of tissue distribution, expressed in heart and skeletal muscle.

It localises to the nucleus. The protein resides in the nucleolus. Functionally, plays a role in targeting PPP1CA to the nucleolus. This is Nucleolar MIF4G domain-containing protein 1 (NOM1) from Homo sapiens (Human).